A 51-amino-acid chain; its full sequence is Large ribosomal subunit protein eL39 (51 aa).

The protein belongs to the eukaryotic ribosomal protein eL39 family.

This is Large ribosomal subunit protein eL39 from Sulfurisphaera tokodaii (strain DSM 16993 / JCM 10545 / NBRC 100140 / 7) (Sulfolobus tokodaii).